A 287-amino-acid chain; its full sequence is Genetic interactor of prohibitin 7, mitochondrial (287 aa).

The N-terminal 24 residues, 1–24 (MVLSNVKIFRLKSHRAFRIGPMIK), are a transit peptide targeting the mitochondrion. Residues 250-266 (SKAIISFVVFVSIYVWL) form a helical membrane-spanning segment.

It belongs to the GEP7 family.

The protein resides in the mitochondrion membrane. Its function is as follows. Involved in respiratory growth and required for cell survival in the absence of prohibitins or GEM1. The sequence is that of Genetic interactor of prohibitin 7, mitochondrial (GEP7) from Saccharomyces cerevisiae (strain YJM789) (Baker's yeast).